The primary structure comprises 327 residues: Phospho-N-acetylmuramoyl-pentapeptide-transferase (327 aa).

10 helical membrane-spanning segments follow: residues Thr3–Ile23, Thr51–Phe71, Val79–Leu99, Leu115–Gly135, Val140–Val160, Ile172–Leu192, Phe197–Asn217, Ile223–Ala243, Trp248–Val268, and Val306–Tyr326.

It belongs to the glycosyltransferase 4 family. MraY subfamily. Mg(2+) is required as a cofactor.

The protein localises to the cell membrane. The catalysed reaction is UDP-N-acetyl-alpha-D-muramoyl-L-alanyl-gamma-D-glutamyl-L-lysyl-D-alanyl-D-alanine + di-trans,octa-cis-undecaprenyl phosphate = Mur2Ac(oyl-L-Ala-gamma-D-Glu-L-Lys-D-Ala-D-Ala)-di-trans,octa-cis-undecaprenyl diphosphate + UMP. The protein operates within cell wall biogenesis; peptidoglycan biosynthesis. In terms of biological role, catalyzes the initial step of the lipid cycle reactions in the biosynthesis of the cell wall peptidoglycan: transfers peptidoglycan precursor phospho-MurNAc-pentapeptide from UDP-MurNAc-pentapeptide onto the lipid carrier undecaprenyl phosphate, yielding undecaprenyl-pyrophosphoryl-MurNAc-pentapeptide, known as lipid I. This is Phospho-N-acetylmuramoyl-pentapeptide-transferase from Streptococcus gordonii (strain Challis / ATCC 35105 / BCRC 15272 / CH1 / DL1 / V288).